The sequence spans 621 residues: Chaperone protein DnaK (621 aa).

Thr202 is modified (phosphothreonine; by autocatalysis). The interval 596-621 (SQFAQAAKQNEEKKEEDKKDSEESKN) is disordered. Positions 604-621 (QNEEKKEEDKKDSEESKN) are enriched in basic and acidic residues.

The protein belongs to the heat shock protein 70 family.

Functionally, acts as a chaperone. The polypeptide is Chaperone protein DnaK (Malacoplasma penetrans (strain HF-2) (Mycoplasma penetrans)).